Consider the following 436-residue polypeptide: Ribosomal protein uS12 methylthiotransferase RimO (436 aa).

An MTTase N-terminal domain is found at 2-117; that stretch reads RNVGIISLGC…IVDVIEEVKK (116 aa). Residues C11, C47, C80, C154, C158, and C161 each contribute to the [4Fe-4S] cluster site. Residues 140–369 form the Radical SAM core domain; the sequence is TTPPYYAYLK…MEIQKQISYE (230 aa). Residues 372 to 436 enclose the TRAM domain; it reads MSKIGTKLEV…AFEYDLVGEY (65 aa).

The protein belongs to the methylthiotransferase family. RimO subfamily. Requires [4Fe-4S] cluster as cofactor.

The protein resides in the cytoplasm. The catalysed reaction is L-aspartate(89)-[ribosomal protein uS12]-hydrogen + (sulfur carrier)-SH + AH2 + 2 S-adenosyl-L-methionine = 3-methylsulfanyl-L-aspartate(89)-[ribosomal protein uS12]-hydrogen + (sulfur carrier)-H + 5'-deoxyadenosine + L-methionine + A + S-adenosyl-L-homocysteine + 2 H(+). In terms of biological role, catalyzes the methylthiolation of an aspartic acid residue of ribosomal protein uS12. This Caldanaerobacter subterraneus subsp. tengcongensis (strain DSM 15242 / JCM 11007 / NBRC 100824 / MB4) (Thermoanaerobacter tengcongensis) protein is Ribosomal protein uS12 methylthiotransferase RimO.